Consider the following 131-residue polypeptide: Protein Bouncer (131 aa).

A signal peptide spans 1–26 (MGSLRTRQLFHAALLWLCLPLPLLLC). 4 cysteine pairs are disulfide-bonded: Cys-31–Cys-56, Cys-50–Cys-74, Cys-80–Cys-99, and Cys-100–Cys-105. The 76-residue stretch at 31 to 106 (CYYSPVLEKE…YSCCDWPYCN (76 aa)) folds into the UPAR/Ly6 domain. Asn-65 carries N-linked (GlcNAc...) asparagine glycosylation. The GPI-anchor amidated asparagine moiety is linked to residue Asn-106. Positions 107-131 (RAVALEPLTAMLVAAAVVACSFCLT) are cleaved as a propeptide — removed in mature form.

The protein belongs to the SPACA4/bouncer family. As to quaternary structure, interacts with spermatocyte complex composed of izumo1, spaca6 and tmem81. As to expression, expressed in oocytes. Not expressed in testis.

The protein localises to the cell membrane. Functionally, oocyte-expressed fertilization factor that mediates sperm-egg binding and is essential for sperm entry into the egg. Necessary and sufficient to mediate species-specific gamete recognition and fertilization, which is essential for vertebrate species performing external fertilization. External fertilization cannot guarantee that only conspecific sperm reaches the egg by precopulatory mate choice: proteins such as Bouncer can therefore support the selection of conspecific sperm. This is Protein Bouncer from Oryzias latipes (Japanese rice fish).